Here is a 953-residue protein sequence, read N- to C-terminus: 26S proteasome non-ATPase regulatory subunit 1 (953 aa).

At Met1 the chain carries N-acetylmethionine; partial. Phosphothreonine is present on Thr273. The segment at Pro279–Pro318 is disordered. The residue at position 290 (Ser290) is a Phosphoserine. A compositionally biased stretch (basic and acidic residues) spans Ser290–Thr303. Lys310 is modified (N6-acetyllysine). Position 311 is a phosphothreonine (Thr311). At Ser315 the chain carries Phosphoserine. PC repeat units follow at residues Thr403 to Ala436, Gly441 to Arg474, Gly476 to Glu510, Ala511 to Leu545, Gly547 to Arg580, Ser581 to Arg616, Ala617 to Arg649, Gly651 to Gln685, Gly686 to Ala726, and Gly729 to Val761. The residue at position 720 (Lys720) is an N6-acetyllysine. Thr830 is subject to Phosphothreonine. Residue Ser834 is modified to Phosphoserine. Disordered regions lie at residues Ala839–Pro881 and Ala930–Asp953. Composition is skewed to basic and acidic residues over residues Lys842–Glu852 and Ala859–Glu872. The segment covering Glu936–Asp953 has biased composition (acidic residues).

It belongs to the proteasome subunit S1 family. In terms of assembly, component of the 19S proteasome regulatory particle complex. The 26S proteasome consists of a 20S core particle (CP) and two 19S regulatory subunits (RP). The regulatory particle is made of a lid composed of 9 subunits, a base containing 6 ATPases and few additional components including PSMD1. Interacts with ADRM1. Interacts with ZFAND1.

Functionally, component of the 26S proteasome, a multiprotein complex involved in the ATP-dependent degradation of ubiquitinated proteins. This complex plays a key role in the maintenance of protein homeostasis by removing misfolded or damaged proteins, which could impair cellular functions, and by removing proteins whose functions are no longer required. Therefore, the proteasome participates in numerous cellular processes, including cell cycle progression, apoptosis, or DNA damage repair. The protein is 26S proteasome non-ATPase regulatory subunit 1 (PSMD1) of Pongo abelii (Sumatran orangutan).